The primary structure comprises 116 residues: uncharacterized protein (116 aa).

Residues 5-113 enclose the VOC domain; it reads EVKMVVLSTE…TGNGLVFYSP (109 aa). Lysine 76 participates in a covalent cross-link: Isoglutamyl lysine isopeptide (Lys-Gln) (interchain with Q-Cter in protein Pup).

This is an uncharacterized protein from Mycolicibacterium smegmatis (strain ATCC 700084 / mc(2)155) (Mycobacterium smegmatis).